The following is a 510-amino-acid chain: MDYVTQSPWIVTLIVAATTYCTLRWVQYWRSWVNVPVVGRRGFLGSWISTILWTWEARGCIQKGYEKNKDFAFQVSTPNGWEVCICNDDMIKEYKNLMDDQMSALAVTSETFQAKYTLPGADWDAVHKLVPQPALAKSLMWLRNRAANDTDPYFADFVKTFQRAFKEEIQVEQDGAPFPCFPRYSRIVAALTVKALLGSLENRPELIDLLCEYAEAIPLDGFFIALFPAVLKPIVAFFCKAPRLSDRLVKVITEEIARRELENKHRIPEDMTDWMAQWVKDNPGYCIESAVVRVIATFFGGIHTTTQLTVHTLLEIATRPEYVDPLRQEITTALKTHGGWNKSAIESMTKLDSFIKEAQRFNPLDAASLARQATRDFQFSNGLKLPRGTWVFAPNGPMLFDESLYPAGSQFDGLRFWKLAEQTQKPHDYRLVTASSKYLQFGDGRHTCPGRFMAADEIRLIVAHTLFHFDIAIKNHGPRPRNTTFKKICFPDMAAEIMLRPRKPHGSDGN.

Residues 9–26 (WIVTLIVAATTYCTLRWV) traverse the membrane as a helical segment. Residues N148 and N341 are each glycosylated (N-linked (GlcNAc...) asparagine). C448 provides a ligand contact to heme. Residue N482 is glycosylated (N-linked (GlcNAc...) asparagine).

Belongs to the cytochrome P450 family. Heme serves as cofactor.

It localises to the membrane. It functions in the pathway secondary metabolite biosynthesis. In terms of biological role, cytochrome P450 monooxygenase; part of the gene cluster that mediates the biosynthesis of the indole diterpenes penitrems. The geranylgeranyl diphosphate (GGPP) synthase penG catalyzes the first step in penitrem biosynthesis via conversion of farnesyl pyrophosphate and isopentyl pyrophosphate into geranylgeranyl pyrophosphate (GGPP). Condensation of indole-3-glycerol phosphate with GGPP by the prenyl transferase penC then forms 3-geranylgeranylindole (3-GGI). Epoxidation by the FAD-dependent monooxygenase penM leads to a epoxidized-GGI that is substrate of the terpene cyclase penB for cyclization to yield paspaline. Paspaline is subsequently converted to 13-desoxypaxilline by the cytochrome P450 monooxygenase penP, the latter being then converted to paxilline by the cytochrome P450 monooxygenase penQ. Paxilline is converted to beta-paxitriol via C-10 ketoreduction by the short-chain dehydrogenase PC-15 which can be monoprenylated at the C-20 by the indole diterpene prenyltransferase penD. A two-step elimination (acetylation and elimination) process performed by the O-acetyltransferase PC-16 and the P.simplicissimum ptmI-ortholog not yet identified in P.crustosum, leads to the production of the prenylated form of penijanthine. The FAD-linked oxidoreductase ptmO then converts the prenylated form of penijanthine into PC-M5 which is in turn transformed into PC-M4 by the aromatic dimethylallyltransferase PC-22. A series of oxidation steps involving 4 cytochrome P450 monooxygenases (PC-21, PC-05, PC-23, PC-20) and a FAD-dependent monooxygenase (PC-14) are required for the transformation of PC-M4 to penitrems A and E. Synthesis of these final products is proposed to proceed via penitrems D and C (PC-21, PC-05, PC-14) and penitrems B and F (PC-21, PC-05, PC-14, PC-23). This Penicillium crustosum (Blue mold fungus) protein is Cytochrome P450 monooxygenase penQ.